Consider the following 252-residue polypeptide: Transcriptional regulatory protein HptR (252 aa).

One can recognise a Response regulatory domain in the interval 3-118; sequence KVVICDDERI…QLEVILGRLV (116 aa). Position 55 is a 4-aspartylphosphate (aspartate 55). Residues 153-250 enclose the HTH araC/xylS-type domain; sequence NQIVDQIKQS…QMSPSDYCKQ (98 aa). DNA-binding regions (H-T-H motif) lie at residues 170-191 and 217-240; these read SDLI…KDHV and HYEI…KKYL.

Post-translationally, phosphorylated by HptS.

It is found in the cytoplasm. In terms of biological role, member of the two-component regulatory system HptS/HptR that regulates genes involved in hexose phosphate transport system in response to changes in extracellular phosphate sources. Activates uhpT expression to facilitate glucose-6-phosphate/G6P utilization by directly binding to its promoter. Antagonizes CcpA-dependent transcription of a subset of CcpA-regulated genes involved in antibiotic susceptibility. The sequence is that of Transcriptional regulatory protein HptR (hptR) from Staphylococcus aureus (strain NCTC 8325 / PS 47).